The sequence spans 89 residues: Large ribosomal subunit protein bL28 (89 aa).

It belongs to the bacterial ribosomal protein bL28 family.

The chain is Large ribosomal subunit protein bL28 from Chlamydia pneumoniae (Chlamydophila pneumoniae).